The chain runs to 66 residues: Defensin-like peptide 2/4 (66 aa).

The first 22 residues, 1–22 (MRLAYLLLLLVAVLFQAGGGSA), serve as a signal peptide directing secretion. A propeptide spanning residues 23–24 (KP) is cleaved from the precursor. Methionine 26 is modified (D-methionine; in form DLP-2). Cystine bridges form between cysteine 33–cysteine 63, cysteine 40–cysteine 56, and cysteine 48–cysteine 64.

Post-translationally, stereoinversion of L-Met-26 (in DLP-4) to D-Met-26 (in DLP-2). As to expression, produced by the crural gland and detected in venom from the spur located on each male hind leg. Is also widely expressed in both male and female tissues, including brain, intestine, kidney, lung, spleen and testis.

Its subcellular location is the secreted. Its function is as follows. Does not show antimicrobial, myotoxic, hemolytic and cell-promoting activities. The protein is Defensin-like peptide 2/4 of Ornithorhynchus anatinus (Duckbill platypus).